A 100-amino-acid polypeptide reads, in one-letter code: Urease subunit gamma (100 aa).

It belongs to the urease gamma subunit family. Heterotrimer of UreA (gamma), UreB (beta) and UreC (alpha) subunits. Three heterotrimers associate to form the active enzyme.

It is found in the cytoplasm. The enzyme catalyses urea + 2 H2O + H(+) = hydrogencarbonate + 2 NH4(+). The protein operates within nitrogen metabolism; urea degradation; CO(2) and NH(3) from urea (urease route): step 1/1. The chain is Urease subunit gamma from Burkholderia cenocepacia (strain ATCC BAA-245 / DSM 16553 / LMG 16656 / NCTC 13227 / J2315 / CF5610) (Burkholderia cepacia (strain J2315)).